Here is a 280-residue protein sequence, read N- to C-terminus: 2-dehydro-3-deoxyphosphooctonate aldolase (280 aa).

This sequence belongs to the KdsA family.

The protein resides in the cytoplasm. It catalyses the reaction D-arabinose 5-phosphate + phosphoenolpyruvate + H2O = 3-deoxy-alpha-D-manno-2-octulosonate-8-phosphate + phosphate. It participates in carbohydrate biosynthesis; 3-deoxy-D-manno-octulosonate biosynthesis; 3-deoxy-D-manno-octulosonate from D-ribulose 5-phosphate: step 2/3. The protein operates within bacterial outer membrane biogenesis; lipopolysaccharide biosynthesis. The polypeptide is 2-dehydro-3-deoxyphosphooctonate aldolase (Nitrosococcus oceani (strain ATCC 19707 / BCRC 17464 / JCM 30415 / NCIMB 11848 / C-107)).